A 363-amino-acid chain; its full sequence is UDP-3-O-acylglucosamine N-acyltransferase (363 aa).

The active-site Proton acceptor is the H252.

It belongs to the transferase hexapeptide repeat family. LpxD subfamily. As to quaternary structure, homotrimer.

It catalyses the reaction a UDP-3-O-[(3R)-3-hydroxyacyl]-alpha-D-glucosamine + a (3R)-hydroxyacyl-[ACP] = a UDP-2-N,3-O-bis[(3R)-3-hydroxyacyl]-alpha-D-glucosamine + holo-[ACP] + H(+). It participates in bacterial outer membrane biogenesis; LPS lipid A biosynthesis. Its function is as follows. Catalyzes the N-acylation of UDP-3-O-acylglucosamine using 3-hydroxyacyl-ACP as the acyl donor. Is involved in the biosynthesis of lipid A, a phosphorylated glycolipid that anchors the lipopolysaccharide to the outer membrane of the cell. This is UDP-3-O-acylglucosamine N-acyltransferase from Cupriavidus taiwanensis (strain DSM 17343 / BCRC 17206 / CCUG 44338 / CIP 107171 / LMG 19424 / R1) (Ralstonia taiwanensis (strain LMG 19424)).